The sequence spans 40 residues: Neutral phospholipase A2 homolog cannitoxin beta chain 2 (40 aa).

Heterotrimer of alpha, beta, and gamma chains; non-covalently linked. As to expression, expressed by the venom gland.

It is found in the secreted. Heterotrimer: Snake venom phospholipase A2 (PLA2) heterotrimer that acts as a potent presynaptic neurotoxin by blocking synaptic transmission and synaptic vesicle recycling. Enzymatic activity is essential for the neurotoxic effects. May act by binding in a calcium-dependent fashion to neurotonal pentraxin-1 (NPTX1) and neurotonal pentraxin-2 (NPTX2), but not to neuronal pentraxin receptor (NPTXR). Also binds to taipoxin-associated calcium binding protein 49 (RCN2), a protein localized in the lumen of endoplasmic reticulum. In terms of biological role, monomer (beta chain): Snake venom phospholipase A2 homolog that is neither toxic nor enzymatically active. Does not bind calcium. The sequence is that of Neutral phospholipase A2 homolog cannitoxin beta chain 2 from Oxyuranus scutellatus canni (Papuan taipan).